The sequence spans 636 residues: DNA-directed RNA polymerase III subunit RPC3 (636 aa).

Residues serine 366 to leucine 385 form a disordered region. Positions leucine 563–leucine 584 are leucine-zipper.

This sequence belongs to the RNA polymerase beta chain family. As to quaternary structure, component of the RNA polymerase III (Pol III) complex consisting of 17 subunits.

Its subcellular location is the nucleus. In terms of biological role, DNA-dependent RNA polymerase catalyzes the transcription of DNA into RNA using the four ribonucleoside triphosphates as substrates. Specific core component of RNA polymerase III which synthesizes small RNAs, such as 5S rRNA and tRNAs. The chain is DNA-directed RNA polymerase III subunit RPC3 (RPC82) from Eremothecium gossypii (strain ATCC 10895 / CBS 109.51 / FGSC 9923 / NRRL Y-1056) (Yeast).